Consider the following 426-residue polypeptide: Glucan endo-1,3-beta-glucosidase 11 (426 aa).

Positions 1-30 are cleaved as a signal peptide; the sequence is MELTSFHRSSLLFLISLTLIILPTTTTSIG. An N-linked (GlcNAc...) asparagine glycan is attached at asparagine 112. Glutamate 121 acts as the Proton donor in catalysis. An N-linked (GlcNAc...) asparagine glycan is attached at asparagine 126. The active-site Nucleophile is the glutamate 266. The span at 360–372 shows a compositional bias: gly residues; that stretch reads GGGTGGGNSSSGG. Positions 360–389 are disordered; sequence GGGTGGGNSSSGGGRDKSPVFPVSPVAPDS. The N-linked (GlcNAc...) asparagine glycan is linked to asparagine 367. A lipid anchor (GPI-anchor amidated serine) is attached at serine 398. The propeptide at 399 to 426 is removed in mature form; it reads ASPVTGKRKGKGAILSLVVSMLLARHLL.

It belongs to the glycosyl hydrolase 17 family.

The protein resides in the secreted. It localises to the cell wall. Its subcellular location is the cell membrane. The enzyme catalyses Hydrolysis of (1-&gt;3)-beta-D-glucosidic linkages in (1-&gt;3)-beta-D-glucans.. The protein is Glucan endo-1,3-beta-glucosidase 11 of Arabidopsis thaliana (Mouse-ear cress).